We begin with the raw amino-acid sequence, 430 residues long: Peptidoglycan DD-endopeptidase ShyA (430 aa).

The signal sequence occupies residues 1 to 35 (MISKSIILRFSELSMRKKATLVGLPLLAVAAISSS). Residues His-297, Asp-301, and His-378 each coordinate Zn(2+).

The protein belongs to the peptidase M23B family. Zn(2+) is required as a cofactor.

The protein localises to the periplasm. It participates in cell wall degradation; peptidoglycan degradation. Reduced activity in 0.5 mM EDTA and a complete loss of activity at higher EDTA concentrations. The effect of EDTA can be reversed by addition of 1 mM ZnCl(2). Conformational switching between open (catalytically active) and closed (catalytically inactive) conformation of this protein is suggested mechanism of its regulation. The signal or inducer of the conformational shift to the open form unmasking the active site is currently not understood. In terms of biological role, cell wall peptidoglycan (PG) DD-endopeptidase essential for cell growth and elongation. Hydrolyzes peptide cross-links which covalently connect adjacent PG strands probably to allow insertion of new glycans and thus cell wall expansion. Degrades purified whole PG sacculi in vitro. Releases predominantly short glycan chains from the PG. Cleaves D,D cross-linked muropeptides specifically preferring dimeric tetrapeptide-tetrapeptide (D44) substrates and has only little activity on dimeric tetrapeptide-pentapeptide (D45) substrates. Also converts more than 50% of tetrapeptide-tripeptide (D43) to product as well as more than 50% of D43M, which contains D-Met instead of D-Ala in the fourth position of the acceptor moiety. Cleaves the D,D bond between diaminopimelic acid (DAP) and D-Ala of the PG substrate in vitro. No cleavage of L,D bond connecting two DAP moieties. The chain is Peptidoglycan DD-endopeptidase ShyA from Vibrio cholerae serotype O1 (strain ATCC 39315 / El Tor Inaba N16961).